Consider the following 312-residue polypeptide: Malate dehydrogenase (312 aa).

Residues 7–13 (GAAGGIG) and Asp34 contribute to the NAD(+) site. 2 residues coordinate substrate: Arg81 and Arg87. Residues Asn94 and 117–119 (ITN) each bind NAD(+). Substrate contacts are provided by Asn119 and Arg153. The Proton acceptor role is filled by His177. Met227 is a binding site for NAD(+).

This sequence belongs to the LDH/MDH superfamily. MDH type 1 family. Homodimer.

It carries out the reaction (S)-malate + NAD(+) = oxaloacetate + NADH + H(+). Its function is as follows. Catalyzes the reversible oxidation of malate to oxaloacetate. The chain is Malate dehydrogenase from Edwardsiella ictaluri (strain 93-146).